The primary structure comprises 756 residues: 5-methyltetrahydropteroyltriglutamate--homocysteine methyltransferase (756 aa).

Residues Arg-16–Lys-19 and Lys-112 contribute to the 5-methyltetrahydropteroyltri-L-glutamate site. Residues Ile-432–Ser-434 and Glu-485 contribute to the L-homocysteine site. L-methionine is bound by residues Ile-432–Ser-434 and Glu-485. 5-methyltetrahydropteroyltri-L-glutamate-binding positions include Arg-516–Cys-517 and Trp-562. Asp-600 contacts L-homocysteine. Asp-600 is a binding site for L-methionine. Residue Glu-606 coordinates 5-methyltetrahydropteroyltri-L-glutamate. Positions 642, 644, and 666 each coordinate Zn(2+). His-695 functions as the Proton donor in the catalytic mechanism. A Zn(2+)-binding site is contributed by Cys-727.

This sequence belongs to the vitamin-B12 independent methionine synthase family. Zn(2+) serves as cofactor.

The enzyme catalyses 5-methyltetrahydropteroyltri-L-glutamate + L-homocysteine = tetrahydropteroyltri-L-glutamate + L-methionine. It participates in amino-acid biosynthesis; L-methionine biosynthesis via de novo pathway; L-methionine from L-homocysteine (MetE route): step 1/1. Its function is as follows. Catalyzes the transfer of a methyl group from 5-methyltetrahydrofolate to homocysteine resulting in methionine formation. This is 5-methyltetrahydropteroyltriglutamate--homocysteine methyltransferase from Haemophilus influenzae (strain PittGG).